Reading from the N-terminus, the 195-residue chain is Protein lin-28 homolog A (195 aa).

In terms of domain architecture, CSD spans 33–106 (QGSGVCKWFN…GLESTQVTGP (74 aa)). The interval 98 to 127 (LESTQVTGPGGAPCIGSERRPKVKGQQKRR) is disordered. Positions 107–130 (GGAPCIGSERRPKVKGQQKRRQRG) are flexible linker. The segment covering 118–127 (PKVKGQQKRR) has biased composition (basic residues). CCHC-type zinc fingers lie at residues 131 to 148 (DRCYNCGGLDHHAKECKL) and 153 to 170 (KKCHFCQNPNHMVAQCPE). 8 residues coordinate Zn(2+): Cys133, Cys136, His141, Cys146, Cys155, Cys158, His163, and Cys168.

Belongs to the lin-28 family. Monomer.

Its subcellular location is the cytoplasm. The protein localises to the rough endoplasmic reticulum. It localises to the P-body. It is found in the stress granule. The protein resides in the nucleus. Its subcellular location is the nucleolus. RNA-binding protein that inhibits processing of pre-let-7 miRNAs and regulates translation of mRNAs that control developmental timing, pluripotency and metabolism. Seems to recognize a common structural G-quartet (G4) feature in its miRNA and mRNA targets. 'Translational enhancer' that drives specific mRNAs to polysomes and increases the efficiency of protein synthesis. Its association with the translational machinery and target mRNAs results in an increased number of initiation events per molecule of mRNA and, indirectly, in mRNA stabilization. Suppressor of microRNA (miRNA) biogenesis, including that of let-7. Binds specific target miRNA precursors (pre-miRNAs), recognizing an 5'-GGAG-3' motif found in their terminal loop, and recruits uridylyltransferase. This results in the terminal uridylation of target pre-miRNAs. Uridylated pre-miRNAs fail to be processed by Dicer and undergo degradation. Localized to the periendoplasmic reticulum area, binds to a large number of spliced mRNAs and inhibits the translation of mRNAs destined for the ER, reducing the synthesis of transmembrane proteins, ER or Golgi lumen proteins, and secretory proteins. Binds to and enhances the translation of mRNAs for several metabolic enzymes, increasing glycolysis and oxidative phosphorylation. Which, with the let-7 repression may enhance tissue repair in adult tissue. This Xenopus laevis (African clawed frog) protein is Protein lin-28 homolog A (lin28a).